We begin with the raw amino-acid sequence, 365 residues long: NAC domain-containing protein 43 (365 aa).

Positions Val-16 to Lys-180 constitute an NAC domain. A DNA-binding region spans residues Ile-116–Thr-186.

As to expression, expressed in various aboveground tissues undergoing thickening of the lignified secondary wall such as anthers, filaments of stamens, the base of carpels, styles, the boundaries between siliques and pedicels, the midrib of leaf veins, and inflorescence stems, specifically in interfascicular fibers (sclerenchyma), cells differentiating into vascular vessels, and xylary fibers (secondary xylem).

The protein localises to the nucleus. Its function is as follows. Transcription activator of genes involved in biosynthesis of secondary walls. Together with NST2 and NST3, required for the secondary cell wall thickening of sclerenchymatous fibers, secondary xylem (tracheary elements), and of the anther endocethium, which is necessary for anther dehiscence. May also regulate the secondary cell wall lignification of other tissues. The polypeptide is NAC domain-containing protein 43 (NAC043) (Arabidopsis thaliana (Mouse-ear cress)).